We begin with the raw amino-acid sequence, 880 residues long: Valine--tRNA ligase (880 aa).

Residues 47–57 (PNITGKLHLGH) carry the 'HIGH' region motif. Positions 526–530 (KMSKS) match the 'KMSKS' region motif. Lys529 serves as a coordination point for ATP. Positions 810–845 (LLDLVDREKELERLNKEKTKLEGEILRVEKKLSNER) form a coiled coil.

It belongs to the class-I aminoacyl-tRNA synthetase family. ValS type 1 subfamily. As to quaternary structure, monomer.

Its subcellular location is the cytoplasm. The catalysed reaction is tRNA(Val) + L-valine + ATP = L-valyl-tRNA(Val) + AMP + diphosphate. Functionally, catalyzes the attachment of valine to tRNA(Val). As ValRS can inadvertently accommodate and process structurally similar amino acids such as threonine, to avoid such errors, it has a 'posttransfer' editing activity that hydrolyzes mischarged Thr-tRNA(Val) in a tRNA-dependent manner. The chain is Valine--tRNA ligase from Clostridium perfringens (strain 13 / Type A).